We begin with the raw amino-acid sequence, 62 residues long: MTIAFQLAVFASIAIPFILVIGVPVVLASPDGWSSSRNVVFSGASSWIGLVFLVGILNSLIS.

2 helical membrane-spanning segments follow: residues 8 to 28 (AVFASIAIPFILVIGVPVVLA) and 41 to 61 (FSGASSWIGLVFLVGILNSLI).

Belongs to the PsbZ family. In terms of assembly, PSII is composed of 1 copy each of membrane proteins PsbA, PsbB, PsbC, PsbD, PsbE, PsbF, PsbH, PsbI, PsbJ, PsbK, PsbL, PsbM, PsbT, PsbY, PsbZ, Psb30/Ycf12, at least 3 peripheral proteins of the oxygen-evolving complex and a large number of cofactors. It forms dimeric complexes.

The protein resides in the plastid. It is found in the chloroplast thylakoid membrane. Its function is as follows. May control the interaction of photosystem II (PSII) cores with the light-harvesting antenna, regulates electron flow through the 2 photosystem reaction centers. PSII is a light-driven water plastoquinone oxidoreductase, using light energy to abstract electrons from H(2)O, generating a proton gradient subsequently used for ATP formation. This chain is Photosystem II reaction center protein Z, found in Huperzia lucidula (Shining clubmoss).